A 354-amino-acid chain; its full sequence is MSTQMRKIIHIDMDCFYAAVEMRDNPNFRSRPLAVGGHEKQRGVISTCNYEARKFGVRSAMPTAQALKLCPSLLVVPGRMQVYKEVSTHIRSIFSRYTHLIEPLSLDEAYLDVTDSTQCHGSATLIAEAIRRDIWNELQLTASAGVAPIKFLAKVASDMNKPNGQFVIPPEQVQSVIDTLPLQKIPGVGKVSLEKLNQAGLYVCQDVKNSDYRQLLKQFGRLGASLWQRSHGIDEREVIVERERKSVGVERTFTQNIVTYEQCWQVIEEKLFPELAIRLEKANPEKAIIKQGIKMKFADFQLTTIEHVHHELELAYFRELLQDILQRQKGREIRLLGLSVMLKPEEQARQLSLL.

The 182-residue stretch at 8–189 (IIHIDMDCFY…LPLQKIPGVG (182 aa)) folds into the UmuC domain. Mg(2+) contacts are provided by Asp12 and Asp107. Glu108 is an active-site residue.

The protein belongs to the DNA polymerase type-Y family. As to quaternary structure, monomer. It depends on Mg(2+) as a cofactor.

It localises to the cytoplasm. The catalysed reaction is DNA(n) + a 2'-deoxyribonucleoside 5'-triphosphate = DNA(n+1) + diphosphate. Functionally, poorly processive, error-prone DNA polymerase involved in untargeted mutagenesis. Copies undamaged DNA at stalled replication forks, which arise in vivo from mismatched or misaligned primer ends. These misaligned primers can be extended by PolIV. Exhibits no 3'-5' exonuclease (proofreading) activity. May be involved in translesional synthesis, in conjunction with the beta clamp from PolIII. This is DNA polymerase IV from Vibrio vulnificus (strain CMCP6).